Reading from the N-terminus, the 938-residue chain is Isoleucine--tRNA ligase (938 aa).

Positions 58–68 (PYANGSIHIGH) match the 'HIGH' region motif. L-isoleucyl-5'-AMP is bound at residue E561. Positions 602 to 606 (KMSKS) match the 'KMSKS' region motif. K605 is a binding site for ATP. 4 residues coordinate Zn(2+): C901, C904, C921, and C924.

This sequence belongs to the class-I aminoacyl-tRNA synthetase family. IleS type 1 subfamily. In terms of assembly, monomer. Zn(2+) is required as a cofactor.

The protein resides in the cytoplasm. It catalyses the reaction tRNA(Ile) + L-isoleucine + ATP = L-isoleucyl-tRNA(Ile) + AMP + diphosphate. Its function is as follows. Catalyzes the attachment of isoleucine to tRNA(Ile). As IleRS can inadvertently accommodate and process structurally similar amino acids such as valine, to avoid such errors it has two additional distinct tRNA(Ile)-dependent editing activities. One activity is designated as 'pretransfer' editing and involves the hydrolysis of activated Val-AMP. The other activity is designated 'posttransfer' editing and involves deacylation of mischarged Val-tRNA(Ile). In Cronobacter sakazakii (strain ATCC BAA-894) (Enterobacter sakazakii), this protein is Isoleucine--tRNA ligase.